Reading from the N-terminus, the 359-residue chain is Nicotinate-nucleotide--dimethylbenzimidazole phosphoribosyltransferase (359 aa).

E318 functions as the Proton acceptor in the catalytic mechanism.

The protein belongs to the CobT family. As to quaternary structure, homodimer.

The enzyme catalyses 5,6-dimethylbenzimidazole + nicotinate beta-D-ribonucleotide = alpha-ribazole 5'-phosphate + nicotinate + H(+). It functions in the pathway nucleoside biosynthesis; alpha-ribazole biosynthesis; alpha-ribazole from 5,6-dimethylbenzimidazole: step 1/2. Its function is as follows. Catalyzes the synthesis of alpha-ribazole-5'-phosphate from nicotinate mononucleotide (NAMN) and 5,6-dimethylbenzimidazole (DMB). The sequence is that of Nicotinate-nucleotide--dimethylbenzimidazole phosphoribosyltransferase from Escherichia coli (strain SMS-3-5 / SECEC).